Reading from the N-terminus, the 283-residue chain is Coiled-coil domain-containing protein 107 (283 aa).

The signal sequence occupies residues 1–24 (MAGAVSLLGVVGLLLVSALSGVLG). The interval 30–62 (DLRAHPGNAAHPGSGATEPRRRPPLKDQRERTR) is disordered. Positions 47-62 (EPRRRPPLKDQRERTR) are enriched in basic and acidic residues. Residues 65 to 85 (SLPLGALYTAAVAAFVLYKCL) traverse the membrane as a helical segment. Residues 104 to 134 (LQSEQQLAQLTQQLAQTEQHLNNLMAQLDPL) adopt a coiled-coil conformation. Disordered regions lie at residues 164-207 (KPDK…SRPL) and 258-283 (AKGP…SLFS). The span at 176–187 (EGSGGESAGGGD) shows a compositional bias: gly residues.

Its subcellular location is the membrane. The protein is Coiled-coil domain-containing protein 107 (CCDC107) of Homo sapiens (Human).